A 122-amino-acid polypeptide reads, in one-letter code: Immunoglobulin lambda variable 8-61 (122 aa).

A signal peptide spans 1-24 (MSVPTMAWMMLLLGLLAYGSGVDS). The tract at residues 25-49 (QTVVTQEPSFSVSPGGTVTLTCGLS) is framework-1. An Ig-like domain is found at 25–122 (QTVVTQEPSF…YCVLYMGSGI (98 aa)). Cysteines 46 and 114 form a disulfide. A complementarity-determining-1 region spans residues 50 to 58 (SGSVSTSYY). Residues 59 to 75 (PSWYQQTPGQAPRTLIY) form a framework-2 region. The segment at 76-78 (STN) is complementarity-determining-2. Residues 79–114 (TRSSGVPDRFSGSILGNKAALTITGAQADDESDYYC) form a framework-3 region. The complementarity-determining-3 stretch occupies residues 115-122 (VLYMGSGI).

As to quaternary structure, immunoglobulins are composed of two identical heavy chains and two identical light chains; disulfide-linked.

It localises to the secreted. The protein localises to the cell membrane. Functionally, v region of the variable domain of immunoglobulin light chains that participates in the antigen recognition. Immunoglobulins, also known as antibodies, are membrane-bound or secreted glycoproteins produced by B lymphocytes. In the recognition phase of humoral immunity, the membrane-bound immunoglobulins serve as receptors which, upon binding of a specific antigen, trigger the clonal expansion and differentiation of B lymphocytes into immunoglobulins-secreting plasma cells. Secreted immunoglobulins mediate the effector phase of humoral immunity, which results in the elimination of bound antigens. The antigen binding site is formed by the variable domain of one heavy chain, together with that of its associated light chain. Thus, each immunoglobulin has two antigen binding sites with remarkable affinity for a particular antigen. The variable domains are assembled by a process called V-(D)-J rearrangement and can then be subjected to somatic hypermutations which, after exposure to antigen and selection, allow affinity maturation for a particular antigen. This Homo sapiens (Human) protein is Immunoglobulin lambda variable 8-61.